The chain runs to 160 residues: Nucleotide-binding protein BAV0791 (160 aa).

Belongs to the YajQ family.

In terms of biological role, nucleotide-binding protein. The sequence is that of Nucleotide-binding protein BAV0791 from Bordetella avium (strain 197N).